A 222-amino-acid polypeptide reads, in one-letter code: Ribonuclease T (222 aa).

Residues 20–194 enclose the Exonuclease domain; it reads VVIDVETAGF…YDTERTAELF (175 aa). Aspartate 23, glutamate 25, histidine 181, and aspartate 186 together coordinate Mg(2+). Histidine 181 acts as the Proton donor/acceptor in catalysis.

The protein belongs to the RNase T family. As to quaternary structure, homodimer. Requires Mg(2+) as cofactor.

Its function is as follows. Trims short 3' overhangs of a variety of RNA species, leaving a one or two nucleotide 3' overhang. Responsible for the end-turnover of tRNA: specifically removes the terminal AMP residue from uncharged tRNA (tRNA-C-C-A). Also appears to be involved in tRNA biosynthesis. In Shewanella oneidensis (strain ATCC 700550 / JCM 31522 / CIP 106686 / LMG 19005 / NCIMB 14063 / MR-1), this protein is Ribonuclease T.